Here is a 600-residue protein sequence, read N- to C-terminus: Arginine--tRNA ligase (600 aa).

The 'HIGH' region signature appears at 132 to 142; that stretch reads ANPTGPLHVGH.

This sequence belongs to the class-I aminoacyl-tRNA synthetase family. In terms of assembly, monomer.

The protein resides in the cytoplasm. The catalysed reaction is tRNA(Arg) + L-arginine + ATP = L-arginyl-tRNA(Arg) + AMP + diphosphate. The polypeptide is Arginine--tRNA ligase (Ralstonia nicotianae (strain ATCC BAA-1114 / GMI1000) (Ralstonia solanacearum)).